The sequence spans 178 residues: E1B protein, small T-antigen (178 aa).

The protein belongs to the adenoviridae E1B 19 kDa protein family.

Its subcellular location is the host cell membrane. It localises to the host nucleus envelope. The protein resides in the host nucleus lamina. Putative adenovirus Bcl-2 homolog that inhibits apoptosis induced by TNF or FAS pathways, as well as p53-mediated apoptosis. Without E1B 19K function, virus production is compromised because of premature death of host cell. Interacts with Bax protein in cell lysates. The sequence is that of E1B protein, small T-antigen from Human adenovirus B serotype 7 (HAdV-7).